Here is a 474-residue protein sequence, read N- to C-terminus: Citrate synthase, mitochondrial (474 aa).

The N-terminal 35 residues, 1–35, are a transit peptide targeting the mitochondrion; sequence MASTLRLSTSALRSSTLAGKPVVQSVAFNGLRCYS. Residues His310, His356, and Asp411 contribute to the active site.

The protein belongs to the citrate synthase family.

Its subcellular location is the mitochondrion matrix. The catalysed reaction is oxaloacetate + acetyl-CoA + H2O = citrate + CoA + H(+). The protein operates within carbohydrate metabolism; tricarboxylic acid cycle; isocitrate from oxaloacetate: step 1/2. The protein is Citrate synthase, mitochondrial (citA) of Emericella nidulans (strain FGSC A4 / ATCC 38163 / CBS 112.46 / NRRL 194 / M139) (Aspergillus nidulans).